The chain runs to 580 residues: Proline--tRNA ligase (580 aa).

This sequence belongs to the class-II aminoacyl-tRNA synthetase family. ProS type 1 subfamily. In terms of assembly, homodimer.

Its subcellular location is the cytoplasm. It catalyses the reaction tRNA(Pro) + L-proline + ATP = L-prolyl-tRNA(Pro) + AMP + diphosphate. Its function is as follows. Catalyzes the attachment of proline to tRNA(Pro) in a two-step reaction: proline is first activated by ATP to form Pro-AMP and then transferred to the acceptor end of tRNA(Pro). As ProRS can inadvertently accommodate and process non-cognate amino acids such as alanine and cysteine, to avoid such errors it has two additional distinct editing activities against alanine. One activity is designated as 'pretransfer' editing and involves the tRNA(Pro)-independent hydrolysis of activated Ala-AMP. The other activity is designated 'posttransfer' editing and involves deacylation of mischarged Ala-tRNA(Pro). The misacylated Cys-tRNA(Pro) is not edited by ProRS. This chain is Proline--tRNA ligase, found in Polynucleobacter necessarius subsp. necessarius (strain STIR1).